A 1860-amino-acid polypeptide reads, in one-letter code: Probable helicase with zinc finger domain (1860 aa).

A C3H1-type zinc finger spans residues 168–196 (SEEYTLCKRFLEQGLCRYGAQCTSAHSQE). 661-668 (GPYGTGKT) contributes to the ATP binding site. The DEAA box motif lies at 787-790 (DEAA). Disordered stretches follow at residues 1106 to 1136 (RSQH…TEPF), 1158 to 1177 (TPPG…VQRL), 1286 to 1317 (ERKA…GFPA), 1556 to 1604 (IQPR…PPDH), 1641 to 1709 (RQDP…RYPS), and 1749 to 1860 (MSEE…TYFK). Residues 1107–1116 (SQHPPQQGPG) show a composition bias toward low complexity. Over residues 1286 to 1298 (ERKAPELKEKQGD) the composition is skewed to basic and acidic residues. The segment covering 1301–1313 (SVQNKSPEPQSNM) has biased composition (polar residues). A compositionally biased stretch (low complexity) spans 1641–1660 (RQDPGPLQHQQQKQQLQAPQ). Composition is skewed to pro residues over residues 1760-1769 (QPPPPPPPHP) and 1783-1794 (PLLPSKQTPPDP). Positions 1847–1860 (GSSNSSNGYYTYFK) are enriched in low complexity.

It belongs to the DNA2/NAM7 helicase family.

Its subcellular location is the nucleus. Functionally, may act as a helicase. This chain is Probable helicase with zinc finger domain (helz), found in Danio rerio (Zebrafish).